A 415-amino-acid polypeptide reads, in one-letter code: Actin-like protein 7B (415 aa).

The segment at 1-31 (MATRNSPMPLGTAQGDPGEAGTRPGPDASLR) is disordered. A Phosphoserine modification is found at serine 6.

This sequence belongs to the actin family. Detected only in the testis and, to a lesser extent, in the prostate.

Its subcellular location is the cytoplasm. The protein localises to the cytoskeleton. In Homo sapiens (Human), this protein is Actin-like protein 7B (ACTL7B).